Here is a 166-residue protein sequence, read N- to C-terminus: Ribosome maturation factor RimM (166 aa).

The 73-residue stretch at 91–163 folds into the PRC barrel domain; the sequence is DDGFYDHELE…TCVITPPEGL (73 aa).

The protein belongs to the RimM family. Binds ribosomal protein uS19.

The protein localises to the cytoplasm. Its function is as follows. An accessory protein needed during the final step in the assembly of 30S ribosomal subunit, possibly for assembly of the head region. Essential for efficient processing of 16S rRNA. May be needed both before and after RbfA during the maturation of 16S rRNA. It has affinity for free ribosomal 30S subunits but not for 70S ribosomes. The polypeptide is Ribosome maturation factor RimM (Corynebacterium diphtheriae (strain ATCC 700971 / NCTC 13129 / Biotype gravis)).